A 277-amino-acid chain; its full sequence is Nuclear egress protein 2 (277 aa).

The Perinuclear space portion of the chain corresponds to 1-250; sequence MEVIPNINSR…ASGECVTTIR (250 aa). The helical transmembrane segment at 251 to 271 threads the bilayer; the sequence is IPRYIVMLWIFSVLLAMVTWG. Residues 272 to 277 are Nuclear-facing; that stretch reads SYRLYS.

Belongs to the herpesviridae NEC2 protein family. Forms a heterohexameric complex with NEC1. In terms of processing, phosphorylated.

The protein resides in the host nucleus inner membrane. Functionally, plays an essential role in virion nuclear egress, the first step of virion release from infected cell. Within the host nucleus, NEC1 interacts with the newly formed capsid through the vertexes and directs it to the inner nuclear membrane by associating with NEC2. Induces the budding of the capsid at the inner nuclear membrane as well as its envelopment into the perinuclear space. There, the NEC1/NEC2 complex promotes the fusion of the enveloped capsid with the outer nuclear membrane and the subsequent release of the viral capsid into the cytoplasm where it will reach the secondary budding sites in the host Golgi or trans-Golgi network. The sequence is that of Nuclear egress protein 2 from Gallid herpesvirus 2 (strain Chicken/Md5/ATCC VR-987) (GaHV-2).